We begin with the raw amino-acid sequence, 836 residues long: Tuftelin-interacting protein 11 (836 aa).

Basic and acidic residues predominate over residues 1–13; that stretch reads MSLSHLYRDGEGH. Disordered stretches follow at residues 1–31, 54–73, and 85–136; these read MSLS…DWDL, WAER…RARD, and LKKG…AGGT. The tract at residues 1–50 is required for interaction with DHX15; the sequence is MSLSHLYRDGEGHMDDDEDERENFEITDWDLQNEFNPNRQRHWQTKEEAT. Ser2 is modified (phosphoserine). Acidic residues predominate over residues 14–28; that stretch reads MDDDEDERENFEITD. The span at 54 to 64 shows a compositional bias: basic and acidic residues; sequence WAERDSDEERP. Residues Ser59 and Ser98 each carry the phosphoserine modification. A compositionally biased stretch (acidic residues) spans 91–102; that stretch reads EEAELEDSDDEE. The segment covering 103-116 has biased composition (basic and acidic residues); it reads KPVKQDEFPKDFGP. Phosphoserine is present on Ser144. Residues 149–195 enclose the G-patch domain; the sequence is TKGIGQKLLQKMGYVPGRGLGKNAQGIINPIEAKQRKGKGAVGAYGS. A disordered region spans residues 183–236; it reads QRKGKGAVGAYGSERTTQSLQDFPVVDSEEEAEEEFQKELSQWRKDPSGSKKKP. Ser210 is modified (phosphoserine). Positions 217-231 are enriched in basic and acidic residues; that stretch reads EFQKELSQWRKDPSG. The Nuclear localization signal motif lies at 699–704; that stretch reads VKDKFN. A required for nuclear speckle localization region spans residues 709–733; sequence IMNRAVSSNVGAYMQPGARENIAYL.

The protein belongs to the TFP11/STIP family. In terms of assembly, identified in the spliceosome C complex. Found in the Intron Large (IL) complex, a post-mRNA release spliceosomal complex containing the excised intron, U2, U5 and U6 snRNPs, and splicing factors. Interacts with TUFT1. Interacts with DHX15; indicative for a recruitment of DHX15 to the IL complex. Interacts with GCFC2.

It localises to the cytoplasm. The protein localises to the nucleus. In terms of biological role, involved in pre-mRNA splicing, specifically in spliceosome disassembly during late-stage splicing events. Intron turnover seems to proceed through reactions in two lariat-intron associated complexes termed Intron Large (IL) and Intron Small (IS). In cooperation with DHX15 seems to mediate the transition of the U2, U5 and U6 snRNP-containing IL complex to the snRNP-free IS complex leading to efficient debranching and turnover of excised introns. May play a role in the differentiation of ameloblasts and odontoblasts or in the forming of the enamel extracellular matrix. The protein is Tuftelin-interacting protein 11 (TFIP11) of Sus scrofa (Pig).